The following is a 325-amino-acid chain: Holliday junction branch migration complex subunit RuvB (325 aa).

Residues 1–181 are large ATPase domain (RuvB-L); it reads MENRLINPVE…FGIVQRLEFY (181 aa). Residues Ile-20, Arg-21, Gly-62, Lys-65, Thr-66, Thr-67, 128–130, Arg-171, Tyr-181, and Arg-218 each bind ATP; that span reads EDF. Residue Thr-66 coordinates Mg(2+). The interval 182–252 is small ATPAse domain (RuvB-S); it reads NIEDLTTIVS…IADSALDMLA (71 aa). Residues 255 to 325 are head domain (RuvB-H); sequence RRGLDHLDRR…VLTQMAIDQL (71 aa). 3 residues coordinate DNA: Arg-291, Arg-310, and Arg-315.

It belongs to the RuvB family. As to quaternary structure, homohexamer. Forms an RuvA(8)-RuvB(12)-Holliday junction (HJ) complex. HJ DNA is sandwiched between 2 RuvA tetramers; dsDNA enters through RuvA and exits via RuvB. An RuvB hexamer assembles on each DNA strand where it exits the tetramer. Each RuvB hexamer is contacted by two RuvA subunits (via domain III) on 2 adjacent RuvB subunits; this complex drives branch migration. In the full resolvosome a probable DNA-RuvA(4)-RuvB(12)-RuvC(2) complex forms which resolves the HJ.

The protein localises to the cytoplasm. It catalyses the reaction ATP + H2O = ADP + phosphate + H(+). The RuvA-RuvB-RuvC complex processes Holliday junction (HJ) DNA during genetic recombination and DNA repair, while the RuvA-RuvB complex plays an important role in the rescue of blocked DNA replication forks via replication fork reversal (RFR). RuvA specifically binds to HJ cruciform DNA, conferring on it an open structure. The RuvB hexamer acts as an ATP-dependent pump, pulling dsDNA into and through the RuvAB complex. RuvB forms 2 homohexamers on either side of HJ DNA bound by 1 or 2 RuvA tetramers; 4 subunits per hexamer contact DNA at a time. Coordinated motions by a converter formed by DNA-disengaged RuvB subunits stimulates ATP hydrolysis and nucleotide exchange. Immobilization of the converter enables RuvB to convert the ATP-contained energy into a lever motion, pulling 2 nucleotides of DNA out of the RuvA tetramer per ATP hydrolyzed, thus driving DNA branch migration. The RuvB motors rotate together with the DNA substrate, which together with the progressing nucleotide cycle form the mechanistic basis for DNA recombination by continuous HJ branch migration. Branch migration allows RuvC to scan DNA until it finds its consensus sequence, where it cleaves and resolves cruciform DNA. The chain is Holliday junction branch migration complex subunit RuvB from Psychrobacter sp. (strain PRwf-1).